The sequence spans 129 residues: Small ribosomal subunit protein uS11 (129 aa).

Belongs to the universal ribosomal protein uS11 family. In terms of assembly, part of the 30S ribosomal subunit. Interacts with proteins S7 and S18. Binds to IF-3.

Its function is as follows. Located on the platform of the 30S subunit, it bridges several disparate RNA helices of the 16S rRNA. Forms part of the Shine-Dalgarno cleft in the 70S ribosome. This Methylocella silvestris (strain DSM 15510 / CIP 108128 / LMG 27833 / NCIMB 13906 / BL2) protein is Small ribosomal subunit protein uS11.